The chain runs to 440 residues: tRNA-2-methylthio-N(6)-dimethylallyladenosine synthase (440 aa).

One can recognise an MTTase N-terminal domain in the interval 2–118 (PKYYIITYGC…LPKILESLDG (117 aa)). Residues Cys11, Cys47, Cys81, Cys155, Cys159, and Cys162 each coordinate [4Fe-4S] cluster. Residues 141-370 (RENKFQAWIP…ENLQRKIIYE (230 aa)) enclose the Radical SAM core domain. Residues 373–436 (LSRVGKEEIV…LWSLKGEVIR (64 aa)) form the TRAM domain.

Belongs to the methylthiotransferase family. MiaB subfamily. As to quaternary structure, monomer. [4Fe-4S] cluster is required as a cofactor.

It is found in the cytoplasm. It carries out the reaction N(6)-dimethylallyladenosine(37) in tRNA + (sulfur carrier)-SH + AH2 + 2 S-adenosyl-L-methionine = 2-methylsulfanyl-N(6)-dimethylallyladenosine(37) in tRNA + (sulfur carrier)-H + 5'-deoxyadenosine + L-methionine + A + S-adenosyl-L-homocysteine + 2 H(+). In terms of biological role, catalyzes the methylthiolation of N6-(dimethylallyl)adenosine (i(6)A), leading to the formation of 2-methylthio-N6-(dimethylallyl)adenosine (ms(2)i(6)A) at position 37 in tRNAs that read codons beginning with uridine. The polypeptide is tRNA-2-methylthio-N(6)-dimethylallyladenosine synthase (Dictyoglomus thermophilum (strain ATCC 35947 / DSM 3960 / H-6-12)).